The chain runs to 165 residues: Endoribonuclease YbeY (165 aa).

Positions 119, 123, and 129 each coordinate Zn(2+).

This sequence belongs to the endoribonuclease YbeY family. Requires Zn(2+) as cofactor.

The protein localises to the cytoplasm. Its function is as follows. Single strand-specific metallo-endoribonuclease involved in late-stage 70S ribosome quality control and in maturation of the 3' terminus of the 16S rRNA. The sequence is that of Endoribonuclease YbeY from Streptomyces coelicolor (strain ATCC BAA-471 / A3(2) / M145).